The following is a 583-amino-acid chain: Secretogranin-2b (583 aa).

Residues 1–28 form the signal peptide; the sequence is MMLSLPKLSAGGVVVLLATLLHTLTVQG. Disordered regions lie at residues 123-159 and 526-583; these read AGESPESQAAGNERRLHKTRRPVADGESPAGDYAGFV and VDNG…VAGM. Positions 534–546 are enriched in basic and acidic residues; sequence AKRDTQGKEEPEG.

This sequence belongs to the chromogranin/secretogranin protein family.

The protein resides in the secreted. Neuroendocrine protein of the granin family that regulates the biogenesis of secretory granules. Required for neurovascular modeling of the hindbrain. Acts in a non-cell autonomous manner and is required for migration and proliferation of central artery endothelial cells. Required for normal courting behavior and spawning. The sequence is that of Secretogranin-2b from Danio rerio (Zebrafish).